We begin with the raw amino-acid sequence, 652 residues long: Probable export ATP-binding/permease protein PFL_2149 (652 aa).

Positions 6–244 (LHLTGISRSF…APSEPPVSVR (239 aa)) constitute an ABC transporter domain. Residue 42–49 (GASGSGKS) coordinates ATP. 5 helical membrane passes run 251–271 (LVASLGLFKEAFVMAWVALVS), 277–297 (LLTMLGIVIGITSVVSIVAIG), 525–545 (LALLLSLIAVISLVVGGIGVM), 586–606 (IGGAIGISLSFAIGYLFTLFI), and 615–635 (MGSIITAFACSTLIGIVFGFV).

The protein belongs to the ABC transporter superfamily. Macrolide exporter (TC 3.A.1.122) family. In terms of assembly, probably part of a tripartite efflux system, which is composed of an inner membrane transporter, a periplasmic membrane fusion protein, and an outer membrane component.

Its subcellular location is the cell inner membrane. In terms of biological role, probably part of a tripartite efflux system. This chain is Probable export ATP-binding/permease protein PFL_2149, found in Pseudomonas fluorescens (strain ATCC BAA-477 / NRRL B-23932 / Pf-5).